Here is a 337-residue protein sequence, read N- to C-terminus: tRNA N6-adenosine threonylcarbamoyltransferase (337 aa).

Residues histidine 111 and histidine 115 each coordinate Fe cation. Substrate contacts are provided by residues 134-138 (LVSGG), aspartate 167, glycine 180, and asparagine 272. Aspartate 300 serves as a coordination point for Fe cation.

This sequence belongs to the KAE1 / TsaD family. Fe(2+) serves as cofactor.

It is found in the cytoplasm. The catalysed reaction is L-threonylcarbamoyladenylate + adenosine(37) in tRNA = N(6)-L-threonylcarbamoyladenosine(37) in tRNA + AMP + H(+). In terms of biological role, required for the formation of a threonylcarbamoyl group on adenosine at position 37 (t(6)A37) in tRNAs that read codons beginning with adenine. Is involved in the transfer of the threonylcarbamoyl moiety of threonylcarbamoyl-AMP (TC-AMP) to the N6 group of A37, together with TsaE and TsaB. TsaD likely plays a direct catalytic role in this reaction. The sequence is that of tRNA N6-adenosine threonylcarbamoyltransferase from Klebsiella pneumoniae (strain 342).